The chain runs to 610 residues: Phosphomethylpyrimidine synthase (610 aa).

Residues asparagine 216, methionine 245, tyrosine 274, histidine 310, 330 to 332, 371 to 374, and glutamate 410 contribute to the substrate site; these read SRG and DGLR. Residue histidine 414 participates in Zn(2+) binding. Tyrosine 437 serves as a coordination point for substrate. Histidine 478 is a Zn(2+) binding site. Residues cysteine 558, cysteine 561, and cysteine 566 each contribute to the [4Fe-4S] cluster site.

The protein belongs to the ThiC family. As to quaternary structure, homodimer. The cofactor is [4Fe-4S] cluster.

It catalyses the reaction 5-amino-1-(5-phospho-beta-D-ribosyl)imidazole + S-adenosyl-L-methionine = 4-amino-2-methyl-5-(phosphooxymethyl)pyrimidine + CO + 5'-deoxyadenosine + formate + L-methionine + 3 H(+). The protein operates within cofactor biosynthesis; thiamine diphosphate biosynthesis. Catalyzes the synthesis of the hydroxymethylpyrimidine phosphate (HMP-P) moiety of thiamine from aminoimidazole ribotide (AIR) in a radical S-adenosyl-L-methionine (SAM)-dependent reaction. The protein is Phosphomethylpyrimidine synthase of Allorhizobium ampelinum (strain ATCC BAA-846 / DSM 112012 / S4) (Agrobacterium vitis (strain S4)).